A 364-amino-acid chain; its full sequence is DNA replication and repair protein RecF (364 aa).

30–37 (GNNAQGKT) serves as a coordination point for ATP.

The protein belongs to the RecF family.

It is found in the cytoplasm. In terms of biological role, the RecF protein is involved in DNA metabolism; it is required for DNA replication and normal SOS inducibility. RecF binds preferentially to single-stranded, linear DNA. It also seems to bind ATP. This Streptococcus uberis (strain ATCC BAA-854 / 0140J) protein is DNA replication and repair protein RecF.